The chain runs to 367 residues: uncharacterized protein (367 aa).

The next 4 membrane-spanning stretches (helical) occupy residues 35–55, 61–81, 92–112, and 113–133; these read YVYDISLIAISILCIVSIILW, LALFAIAPALAIGALGVTLLV, EVADTVAAVSLPFILTGTAAG, and LMFSAIAVGGGAVILANPLFL. 3 disordered regions span residues 177–220, 249–283, and 296–367; these read KLPK…PASI, SNIKKELPNTKSILHTPLNRRSPSGSDSDDVYYTP, and GDIS…SRPK. The span at 257-274 shows a compositional bias: polar residues; that stretch reads NTKSILHTPLNRRSPSGS. Residues 302–312 show a composition bias toward low complexity; that stretch reads SSSSTSSKTST. Residues 323 to 342 are compositionally biased toward basic and acidic residues; sequence SRSERNARHHRNKEDHRQNQ. Residues 357 to 367 are compositionally biased toward basic residues; it reads PRRKKYRSRPK.

The protein belongs to the chlamydial CPn_0443/CT_005/TC_0273 family.

It localises to the cell membrane. This is an uncharacterized protein from Chlamydia muridarum (strain MoPn / Nigg).